A 206-amino-acid polypeptide reads, in one-letter code: Protein FAM228A (206 aa).

The protein belongs to the FAM228 family.

This is Protein FAM228A (FAM228A) from Homo sapiens (Human).